Here is a 169-residue protein sequence, read N- to C-terminus: MFDIGFLELAVIAVIGLIVIGPERLPEAVRSGATWMAKIRKMMRDTRAEIEVQIGADEIRRELHNEQVMKSLEALKVTKDDIQQHILDADRKMMLEQEAEEAKLQTPVSRRVAGDDPTLGTDDNVFTDPSYAHPPEEPSKVEADTSAETPQANNQDQQPTTKTEPANDR.

A helical membrane pass occupies residues 1-21 (MFDIGFLELAVIAVIGLIVIG). Residues 98-169 (EAEEAKLQTP…TTKTEPANDR (72 aa)) are disordered. Residues 134–143 (PPEEPSKVEA) show a composition bias toward basic and acidic residues. The span at 146–169 (SAETPQANNQDQQPTTKTEPANDR) shows a compositional bias: polar residues.

Belongs to the TatB family. The Tat system comprises two distinct complexes: a TatABC complex, containing multiple copies of TatA, TatB and TatC subunits, and a separate TatA complex, containing only TatA subunits. Substrates initially bind to the TatABC complex, which probably triggers association of the separate TatA complex to form the active translocon.

It is found in the cell inner membrane. Part of the twin-arginine translocation (Tat) system that transports large folded proteins containing a characteristic twin-arginine motif in their signal peptide across membranes. Together with TatC, TatB is part of a receptor directly interacting with Tat signal peptides. TatB may form an oligomeric binding site that transiently accommodates folded Tat precursor proteins before their translocation. The protein is Sec-independent protein translocase protein TatB of Saccharophagus degradans (strain 2-40 / ATCC 43961 / DSM 17024).